A 155-amino-acid chain; its full sequence is Medium/long-chain acyl-CoA thioesterase YigI (155 aa).

This sequence belongs to the YigI thioesterase family.

The protein localises to the cytoplasm. The enzyme catalyses a fatty acyl-CoA + H2O = a fatty acid + CoA + H(+). The catalysed reaction is a medium-chain fatty acyl-CoA + H2O = a medium-chain fatty acid + CoA + H(+). It catalyses the reaction a long-chain fatty acyl-CoA + H2O = a long-chain fatty acid + CoA + H(+). Functionally, displays thioesterase activity against medium- to long-chain acyl-CoA substrates. Is involved in the thioesterase-dependent beta-oxidation pathway of (9Z,11E)-octadecadienoate (conjugated linoleic acid or CLA), along with TesB and FadM. This chain is Medium/long-chain acyl-CoA thioesterase YigI (yigI), found in Salmonella typhimurium (strain LT2 / SGSC1412 / ATCC 700720).